We begin with the raw amino-acid sequence, 263 residues long: Taurine import ATP-binding protein TauB (263 aa).

An ABC transporter domain is found at 4 to 235 (LTAEAISLSF…RYAAGETVRS (232 aa)). 40–47 (GPSGCGKS) provides a ligand contact to ATP.

Belongs to the ABC transporter superfamily. Taurine importer (TC 3.A.1.17.1) family. In terms of assembly, the complex is composed of two ATP-binding proteins (TauB), two transmembrane proteins (TauC) and a solute-binding protein (TauA).

It is found in the cell inner membrane. The enzyme catalyses taurine(out) + ATP + H2O = taurine(in) + ADP + phosphate + H(+). Functionally, part of the ABC transporter complex TauABC involved in taurine import. Responsible for energy coupling to the transport system. This chain is Taurine import ATP-binding protein TauB, found in Pseudomonas aeruginosa (strain ATCC 15692 / DSM 22644 / CIP 104116 / JCM 14847 / LMG 12228 / 1C / PRS 101 / PAO1).